The following is a 533-amino-acid chain: Chromosomal replication initiator protein DnaA (533 aa).

The domain I, interacts with DnaA modulators stretch occupies residues 1–72 (MNDFWQHCSA…DLARDFWNAP (72 aa)). A domain II region spans residues 72–196 (PIEVQFVLDP…EAADSMYERS (125 aa)). The disordered stretch occupies residues 83–120 (AGQRSPAGATPLAPRAPLPSANPAPVAPGPASAPAVDA). Residues 96–110 (PRAPLPSANPAPVAP) are compositionally biased toward pro residues. A compositionally biased stretch (low complexity) spans 111-120 (GPASAPAVDA). Residues 197 to 413 (KLNPVLTFDN…GALRKILAYS (217 aa)) form a domain III, AAA+ region region. Positions 241, 243, 244, and 245 each coordinate ATP. A domain IV, binds dsDNA region spans residues 414–533 (KFHGREITIE…LHVLEQTLKG (120 aa)).

It belongs to the DnaA family. Oligomerizes as a right-handed, spiral filament on DNA at oriC.

It localises to the cytoplasm. Functionally, plays an essential role in the initiation and regulation of chromosomal replication. ATP-DnaA binds to the origin of replication (oriC) to initiate formation of the DNA replication initiation complex once per cell cycle. Binds the DnaA box (a 9 base pair repeat at the origin) and separates the double-stranded (ds)DNA. Forms a right-handed helical filament on oriC DNA; dsDNA binds to the exterior of the filament while single-stranded (ss)DNA is stabiized in the filament's interior. The ATP-DnaA-oriC complex binds and stabilizes one strand of the AT-rich DNA unwinding element (DUE), permitting loading of DNA polymerase. After initiation quickly degrades to an ADP-DnaA complex that is not apt for DNA replication. Binds acidic phospholipids. This is Chromosomal replication initiator protein DnaA from Burkholderia pseudomallei (strain 1710b).